The primary structure comprises 365 residues: Putative glycosyltransferase C06E1.7 (365 aa).

The protein belongs to the glycosyltransferase 11 family.

This Caenorhabditis elegans protein is Putative glycosyltransferase C06E1.7.